We begin with the raw amino-acid sequence, 188 residues long: Sulfopyruvate decarboxylase subunit beta (188 aa).

This sequence belongs to the TPP enzyme family. Heterododecamer composed of 6 subunits alpha and 6 subunits beta. Requires thiamine diphosphate as cofactor.

It carries out the reaction 3-sulfopyruvate + H(+) = sulfoacetaldehyde + CO2. The protein operates within cofactor biosynthesis; coenzyme M biosynthesis; sulfoacetaldehyde from phosphoenolpyruvate and sulfite: step 4/4. Its activity is regulated as follows. Inhibited by oxygen when heated in air at 80 degrees Celsius. The enzyme is reactivated by addition of dithionite. Functionally, involved in the biosynthesis of the coenzyme M (2-mercaptoethanesulfonic acid). Catalyzes the decarboxylation of sulfopyruvate to sulfoacetaldehyde. The polypeptide is Sulfopyruvate decarboxylase subunit beta (Methanocaldococcus jannaschii (strain ATCC 43067 / DSM 2661 / JAL-1 / JCM 10045 / NBRC 100440) (Methanococcus jannaschii)).